A 277-amino-acid chain; its full sequence is Release factor glutamine methyltransferase (277 aa).

S-adenosyl-L-methionine contacts are provided by residues 117–121 (GTGTG), Asp140, Trp168, and Asn183. Residue 183 to 186 (NPPY) participates in substrate binding.

This sequence belongs to the protein N5-glutamine methyltransferase family. PrmC subfamily.

It carries out the reaction L-glutaminyl-[peptide chain release factor] + S-adenosyl-L-methionine = N(5)-methyl-L-glutaminyl-[peptide chain release factor] + S-adenosyl-L-homocysteine + H(+). Functionally, methylates the class 1 translation termination release factors RF1/PrfA and RF2/PrfB on the glutamine residue of the universally conserved GGQ motif. The protein is Release factor glutamine methyltransferase of Shigella flexneri.